The primary structure comprises 441 residues: Methylenetetrahydrofolate--tRNA-(uracil-5-)-methyltransferase TrmFO (441 aa).

FAD is bound at residue 7–12 (GAGLSG).

Belongs to the MnmG family. TrmFO subfamily. The cofactor is FAD.

It localises to the cytoplasm. The catalysed reaction is uridine(54) in tRNA + (6R)-5,10-methylene-5,6,7,8-tetrahydrofolate + NADH + H(+) = 5-methyluridine(54) in tRNA + (6S)-5,6,7,8-tetrahydrofolate + NAD(+). The enzyme catalyses uridine(54) in tRNA + (6R)-5,10-methylene-5,6,7,8-tetrahydrofolate + NADPH + H(+) = 5-methyluridine(54) in tRNA + (6S)-5,6,7,8-tetrahydrofolate + NADP(+). Catalyzes the folate-dependent formation of 5-methyl-uridine at position 54 (M-5-U54) in all tRNAs. The polypeptide is Methylenetetrahydrofolate--tRNA-(uracil-5-)-methyltransferase TrmFO (Pseudothermotoga lettingae (strain ATCC BAA-301 / DSM 14385 / NBRC 107922 / TMO) (Thermotoga lettingae)).